We begin with the raw amino-acid sequence, 179 residues long: Gut granule loss protein 3 (179 aa).

The disordered stretch occupies residues 40–59 (DLDSASSGVGSSTCTEEQES). The segment covering 42–54 (DSASSGVGSSTCT) has biased composition (polar residues).

The protein is Gut granule loss protein 3 (glo-3) of Caenorhabditis elegans.